Reading from the N-terminus, the 411-residue chain is Snake venom metalloproteinase ACLF (411 aa).

A signal peptide spans 1–20; that stretch reads MIQVLLVTLCLAAFPYQGSS. The propeptide occupies 21 to 189; that stretch reads IILESGNVND…KKAFQLNLTP (169 aa). One can recognise a Peptidase M12B domain in the interval 197–393; sequence RYVELVIVAD…NNPQCILNKP (197 aa). Glu200 and Asp284 together coordinate Ca(2+). Intrachain disulfides connect Cys308/Cys388, Cys348/Cys372, and Cys350/Cys355. His333 contributes to the Zn(2+) binding site. Glu334 is an active-site residue. Zn(2+) contacts are provided by His337 and His343. Ca(2+) contacts are provided by Cys388, Asn391, Val403, Asn406, Leu408, and Glu410.

The protein belongs to the venom metalloproteinase (M12B) family. P-I subfamily. Monomer. Requires Zn(2+) as cofactor. As to expression, expressed by the venom gland.

It localises to the secreted. Its activity is regulated as follows. Inhibited by EDTA and 1,10-phenanthroline, but not by PMSF. In terms of biological role, snake venom zinc metalloprotease that has fibrinolytic activity. The recombinant enzyme cleaves both alpha- and beta-chains of fibrinogen, but not the gamma-chain. The recombinant protein does not produce hemorrhage in mice. Cleaves the peptide substrate Abz-LVEALYQ-EDDnp at the Ala-Leu bond in vitro. In Agkistrodon contortrix laticinctus (Broad-banded copperhead), this protein is Snake venom metalloproteinase ACLF (ACLPREF).